We begin with the raw amino-acid sequence, 365 residues long: Caffeic acid 3-O-methyltransferase 1 (365 aa).

130-136 (MNQDKVL) provides a ligand contact to substrate. The segment at 162–180 (AFEYHGTDPRFNKVFNKGM) is substrate binding. Residues Gly208, Asp231, Asp251, Met252, and Lys265 each contribute to the S-adenosyl-L-methionine site. The active-site Proton acceptor is His269.

The protein belongs to the class I-like SAM-binding methyltransferase superfamily. Cation-independent O-methyltransferase family. COMT subfamily. As to quaternary structure, homodimer.

It catalyses the reaction (E)-caffeate + S-adenosyl-L-methionine = (E)-ferulate + S-adenosyl-L-homocysteine + H(+). It functions in the pathway aromatic compound metabolism; phenylpropanoid biosynthesis. Functionally, catalyzes the conversion of caffeic acid to ferulic acid and of 5-hydroxyferulic acid to sinapic acid. The resulting products may subsequently be converted to the corresponding alcohols that are incorporated into lignins. The protein is Caffeic acid 3-O-methyltransferase 1 (HOMT1) of Populus kitakamiensis (Aspen).